We begin with the raw amino-acid sequence, 505 residues long: Lysine--tRNA ligase (505 aa).

E415 and E422 together coordinate Mg(2+).

It belongs to the class-II aminoacyl-tRNA synthetase family. Homodimer. Mg(2+) is required as a cofactor.

Its subcellular location is the cytoplasm. It carries out the reaction tRNA(Lys) + L-lysine + ATP = L-lysyl-tRNA(Lys) + AMP + diphosphate. The sequence is that of Lysine--tRNA ligase from Xanthomonas oryzae pv. oryzae (strain MAFF 311018).